We begin with the raw amino-acid sequence, 65 residues long: Small ribosomal subunit protein bS21 (65 aa).

Belongs to the bacterial ribosomal protein bS21 family.

This chain is Small ribosomal subunit protein bS21, found in Geobacter sp. (strain M21).